The primary structure comprises 655 residues: Broad substrate specificity ATP-binding cassette transporter ABCG2 (655 aa).

Topologically, residues 1 to 395 are cytoplasmic; sequence MSSNSYEVSI…KNLLGNPQAS (395 aa). The ABC transporter domain maps to 36 to 285; sequence LSFHNICYRV…FGAIGFRCEP (250 aa). ATP is bound by residues 79 to 86, 183 to 189, Glu-210, and His-242; these read GPTGGGKS and RGVSGGE. One can recognise an ABC transmembrane type-2 domain in the interval 389 to 651; the sequence is LGNPQASIAQ…TIAYLKLLFL (263 aa). The helical transmembrane segment at 396-416 threads the bilayer; sequence IAQLIVTVFLGLVIGAIFYDL. Topologically, residues 417–428 are extracellular; it reads KNDPAGIQNRAG. The chain crosses the membrane as a helical span at residues 429-449; that stretch reads VLFFLTTNQCFSSVSAVELLV. Topologically, residues 450–477 are cytoplasmic; it reads VEKKLFIHEYISGYYRVSSYFFGKLLSD. Residues 478–498 traverse the membrane as a helical segment; that stretch reads LLPMRMLPSIIFTCITYFLLG. At 499–506 the chain is on the extracellular side; the sequence is LKPKVEAF. Residues 507–527 traverse the membrane as a helical segment; that stretch reads FIMMLTLMMVAYSASSMALAI. Residues 528-535 lie on the Cytoplasmic side of the membrane; sequence AAGQSVVS. Residues 536-556 traverse the membrane as a helical segment; the sequence is IATLLMTISFVFMMIFSGLLV. At 557–630 the chain is on the extracellular side; it reads NLKTVVPWLS…ISPWGLWKNH (74 aa). Cys-592 and Cys-608 are oxidised to a cystine. N-linked (GlcNAc...) asparagine glycosylation is found at Asn-596 and Asn-600. Residues 631 to 651 form a helical membrane-spanning segment; sequence VALACMIVIFLTIAYLKLLFL. The Cytoplasmic portion of the chain corresponds to 652 to 655; that stretch reads KKFS.

Belongs to the ABC transporter superfamily. ABCG family. Eye pigment precursor importer (TC 3.A.1.204) subfamily. As to quaternary structure, homodimer; disulfide-linked. The minimal functional unit is a homodimer, but the major oligomeric form in plasma membrane is a homotetramer with possibility of higher order oligomerization up to homododecamers. N-glycosylated. Glycosylation-deficient ABCG2 is normally expressed and functional. Post-translationally, phosphorylated. Phosphorylation may regulate the localization to the plasma membrane, the homooligomerization and therefore, the activity of the transporter.

Its subcellular location is the cell membrane. The protein resides in the apical cell membrane. It is found in the mitochondrion membrane. It carries out the reaction ATP + H2O + xenobioticSide 1 = ADP + phosphate + xenobioticSide 2.. It catalyses the reaction urate(in) + ATP + H2O = urate(out) + ADP + phosphate + H(+). The catalysed reaction is indoxyl sulfate(in) + ATP + H2O = indoxyl sulfate(out) + ADP + phosphate + H(+). The enzyme catalyses sphing-4-enine 1-phosphate(in) + ATP + H2O = sphing-4-enine 1-phosphate(out) + ADP + phosphate + H(+). It carries out the reaction estrone 3-sulfate(in) + ATP + H2O = estrone 3-sulfate(out) + ADP + phosphate + H(+). It catalyses the reaction dehydroepiandrosterone 3-sulfate(in) + ATP + H2O = dehydroepiandrosterone 3-sulfate(out) + ADP + phosphate + H(+). The catalysed reaction is 4-methylumbelliferone sulfate(in) + ATP + H2O = 4-methylumbelliferone sulfate(out) + ADP + phosphate + H(+). The enzyme catalyses 5,7-dimethyl-2-methylamino-4-(3-pyridylmethyl)-1,3-benzothiazol-6-yl beta-D-glucuronate(in) + ATP + H2O = 5,7-dimethyl-2-methylamino-4-(3-pyridylmethyl)-1,3-benzothiazol-6-yl beta-D-glucuronate(out) + ADP + phosphate + H(+). It carries out the reaction 4-methylumbelliferone beta-D-glucuronate(in) + ATP + H2O = 4-methylumbelliferone beta-D-glucuronate(out) + ADP + phosphate + H(+). It catalyses the reaction 5,7-dimethyl-2-methylamino-4-(3-pyridylmethyl)-1,3-benzothiazol-6-yl sulfate(in) + ATP + H2O = 5,7-dimethyl-2-methylamino-4-(3-pyridylmethyl)-1,3-benzothiazol-6-yl sulfate(out) + ADP + phosphate + H(+). The catalysed reaction is 17beta-estradiol 17-O-(beta-D-glucuronate)(in) + ATP + H2O = 17beta-estradiol 17-O-(beta-D-glucuronate)(out) + ADP + phosphate + H(+). The enzyme catalyses methotrexate(in) + ATP + H2O = methotrexate(out) + ADP + phosphate + H(+). It carries out the reaction riboflavin(in) + ATP + H2O = riboflavin(out) + ADP + phosphate + H(+). It catalyses the reaction pheophorbide a(in) + ATP + H2O = pheophorbide a(out) + ADP + phosphate + H(+). The catalysed reaction is itaconate(in) + ATP + H2O = itaconate(out) + ADP + phosphate + H(+). In terms of biological role, broad substrate specificity ATP-dependent transporter of the ATP-binding cassette (ABC) family that actively extrudes a wide variety of physiological compounds, dietary toxins and xenobiotics from cells. Involved in porphyrin homeostasis, mediating the export of protoporphyrin IX (PPIX) from both mitochondria to cytosol and cytosol to extracellular space, it also functions in the cellular export of heme. Also mediates the efflux of sphingosine-1-P from cells. Acts as a urate exporter functioning in both renal and extrarenal urate excretion. In kidney, it also functions as a physiological exporter of the uremic toxin indoxyl sulfate. Also involved in the excretion of steroids like estrone 3-sulfate/E1S, 3beta-sulfooxy-androst-5-en-17-one/DHEAS, and other sulfate conjugates. Mediates the secretion of the riboflavin and biotin vitamins into milk. Extrudes pheophorbide a, a phototoxic porphyrin catabolite of chlorophyll, reducing its bioavailability. Plays an important role in the exclusion of xenobiotics from the brain. It confers to cells a resistance to multiple drugs and other xenobiotics including mitoxantrone, pheophorbide, camptothecin, methotrexate, azidothymidine, and the anthracyclines daunorubicin and doxorubicin, through the control of their efflux. In placenta, it limits the penetration of drugs from the maternal plasma into the fetus. May play a role in early stem cell self-renewal by blocking differentiation. In inflammatory macrophages, exports itaconate from the cytosol to the extracellular compartment and limits the activation of TFEB-dependent lysosome biogenesis involved in antibacterial innate immune response. This is Broad substrate specificity ATP-binding cassette transporter ABCG2 (ABCG2) from Bos taurus (Bovine).